The chain runs to 175 residues: Putative lipoprotein LppN (175 aa).

The signal sequence occupies residues 1–20 (MRLPGRHVLYALSAVTMLAA). Cys-21 is lipidated: N-palmitoyl cysteine. A lipid anchor (S-diacylglycerol cysteine) is attached at Cys-21. The tract at residues 31-56 (ASTNMNPTNPPATAETATVSPTPAPQ) is disordered. Over residues 33-48 (TNMNPTNPPATAETAT) the composition is skewed to low complexity.

It localises to the cell membrane. In Mycobacterium bovis (strain ATCC BAA-935 / AF2122/97), this protein is Putative lipoprotein LppN (lppN).